The primary structure comprises 573 residues: ATP-dependent RNA helicase RhlB (573 aa).

The short motif at V9–A37 is the Q motif element. Residues L40–L220 form the Helicase ATP-binding domain. Position 53–60 (A53–T60) interacts with ATP. The short motif at D166–D169 is the DEAD box element. One can recognise a Helicase C-terminal domain in the interval R231–L393. The disordered stretch occupies residues T391–S560. Residues E402–G411 show a composition bias toward acidic residues. Basic and acidic residues predominate over residues R419–R432. Gly residues predominate over residues G435–G450. A compositionally biased stretch (basic and acidic residues) spans G451–P462. Residues P484–A499 show a composition bias toward low complexity. Over residues P505–G514 the composition is skewed to basic residues. The segment covering V541–S560 has biased composition (low complexity).

The protein belongs to the DEAD box helicase family. RhlB subfamily. As to quaternary structure, component of the RNA degradosome, which is a multiprotein complex involved in RNA processing and mRNA degradation.

It is found in the cytoplasm. It catalyses the reaction ATP + H2O = ADP + phosphate + H(+). Functionally, DEAD-box RNA helicase involved in RNA degradation. Has RNA-dependent ATPase activity and unwinds double-stranded RNA. The sequence is that of ATP-dependent RNA helicase RhlB from Xanthomonas euvesicatoria pv. vesicatoria (strain 85-10) (Xanthomonas campestris pv. vesicatoria).